Reading from the N-terminus, the 142-residue chain is Transcriptional regulator MraZ (142 aa).

SpoVT-AbrB domains lie at 5-47 and 76-119; these read EFTH…PLNE and ATDC…SAER.

It belongs to the MraZ family. In terms of assembly, forms oligomers.

Its subcellular location is the cytoplasm. It localises to the nucleoid. The polypeptide is Transcriptional regulator MraZ (Limosilactobacillus reuteri (strain DSM 20016) (Lactobacillus reuteri)).